We begin with the raw amino-acid sequence, 213 residues long: ATP phosphoribosyltransferase (213 aa).

Belongs to the ATP phosphoribosyltransferase family. Short subfamily. In terms of assembly, heteromultimer composed of HisG and HisZ subunits.

Its subcellular location is the cytoplasm. The enzyme catalyses 1-(5-phospho-beta-D-ribosyl)-ATP + diphosphate = 5-phospho-alpha-D-ribose 1-diphosphate + ATP. Its pathway is amino-acid biosynthesis; L-histidine biosynthesis; L-histidine from 5-phospho-alpha-D-ribose 1-diphosphate: step 1/9. Functionally, catalyzes the condensation of ATP and 5-phosphoribose 1-diphosphate to form N'-(5'-phosphoribosyl)-ATP (PR-ATP). Has a crucial role in the pathway because the rate of histidine biosynthesis seems to be controlled primarily by regulation of HisG enzymatic activity. In Synechococcus sp. (strain RCC307), this protein is ATP phosphoribosyltransferase.